A 363-amino-acid chain; its full sequence is Molybdenum import ATP-binding protein ModC (363 aa).

In terms of domain architecture, ABC transporter spans 1 to 230 (MISARFSGRQ…PNLPLIHRPD (230 aa)). 31 to 38 (GPSGCGKT) serves as a coordination point for ATP. The Mop domain maps to 289–359 (DTTILNALPA…LKAMALSAPA (71 aa)).

This sequence belongs to the ABC transporter superfamily. Molybdate importer (TC 3.A.1.8) family. In terms of assembly, the complex is composed of two ATP-binding proteins (ModC), two transmembrane proteins (ModB) and a solute-binding protein (ModA).

It localises to the cell inner membrane. The catalysed reaction is molybdate(out) + ATP + H2O = molybdate(in) + ADP + phosphate + H(+). In terms of biological role, part of the ABC transporter complex ModABC involved in molybdenum import. Responsible for energy coupling to the transport system. The protein is Molybdenum import ATP-binding protein ModC of Rhodobacter capsulatus (Rhodopseudomonas capsulata).